A 102-amino-acid chain; its full sequence is Acylphosphatase 1 (102 aa).

Residues 12-100 form the Acylphosphatase-like domain; the sequence is TRLVRVRGRV…PRFDRFEQLP (89 aa). Active-site residues include Arg-27 and Asn-45.

The protein belongs to the acylphosphatase family.

It carries out the reaction an acyl phosphate + H2O = a carboxylate + phosphate + H(+). The chain is Acylphosphatase 1 (acyP1) from Ralstonia nicotianae (strain ATCC BAA-1114 / GMI1000) (Ralstonia solanacearum).